The following is a 209-amino-acid chain: Large ribosomal subunit protein uL3 (209 aa).

Gln150 bears the N5-methylglutamine mark.

Belongs to the universal ribosomal protein uL3 family. As to quaternary structure, part of the 50S ribosomal subunit. Forms a cluster with proteins L14 and L19. Post-translationally, methylated by PrmB.

Functionally, one of the primary rRNA binding proteins, it binds directly near the 3'-end of the 23S rRNA, where it nucleates assembly of the 50S subunit. In Photobacterium profundum (strain SS9), this protein is Large ribosomal subunit protein uL3.